The primary structure comprises 308 residues: uncharacterized protein (308 aa).

The region spanning 1–60 is the HTH lysR-type domain; it reads MNYSLKQLKVFVTVAQEKSFSRAGERIGLSQSAVSHSVKELENHTGVRLLDRTTREVVLT. A DNA-binding region (H-T-H motif) is located at residues 20 to 39; the sequence is FSRAGERIGLSQSAVSHSVK.

Belongs to the LysR transcriptional regulatory family.

This is an uncharacterized protein from Shigella flexneri.